The following is a 537-amino-acid chain: 2-succinyl-5-enolpyruvyl-6-hydroxy-3-cyclohexene-1-carboxylate synthase (537 aa).

The protein belongs to the TPP enzyme family. MenD subfamily. Homodimer. Mg(2+) is required as a cofactor. Requires Mn(2+) as cofactor. The cofactor is thiamine diphosphate.

The enzyme catalyses isochorismate + 2-oxoglutarate + H(+) = 5-enolpyruvoyl-6-hydroxy-2-succinyl-cyclohex-3-ene-1-carboxylate + CO2. It functions in the pathway quinol/quinone metabolism; 1,4-dihydroxy-2-naphthoate biosynthesis; 1,4-dihydroxy-2-naphthoate from chorismate: step 2/7. Its pathway is quinol/quinone metabolism; menaquinone biosynthesis. Functionally, catalyzes the thiamine diphosphate-dependent decarboxylation of 2-oxoglutarate and the subsequent addition of the resulting succinic semialdehyde-thiamine pyrophosphate anion to isochorismate to yield 2-succinyl-5-enolpyruvyl-6-hydroxy-3-cyclohexene-1-carboxylate (SEPHCHC). This is 2-succinyl-5-enolpyruvyl-6-hydroxy-3-cyclohexene-1-carboxylate synthase from Rhodococcus erythropolis (strain PR4 / NBRC 100887).